A 267-amino-acid chain; its full sequence is Thiazole synthase (267 aa).

K101 acts as the Schiff-base intermediate with DXP in catalysis. 1-deoxy-D-xylulose 5-phosphate-binding positions include G162, 188-189, and 210-211; these read AG and NT. The segment at 247 to 267 is disordered; the sequence is HASPSSPAAGVPCLPDPEVPV.

Belongs to the ThiG family. As to quaternary structure, homotetramer. Forms heterodimers with either ThiH or ThiS.

Its subcellular location is the cytoplasm. It catalyses the reaction [ThiS sulfur-carrier protein]-C-terminal-Gly-aminoethanethioate + 2-iminoacetate + 1-deoxy-D-xylulose 5-phosphate = [ThiS sulfur-carrier protein]-C-terminal Gly-Gly + 2-[(2R,5Z)-2-carboxy-4-methylthiazol-5(2H)-ylidene]ethyl phosphate + 2 H2O + H(+). The protein operates within cofactor biosynthesis; thiamine diphosphate biosynthesis. Its function is as follows. Catalyzes the rearrangement of 1-deoxy-D-xylulose 5-phosphate (DXP) to produce the thiazole phosphate moiety of thiamine. Sulfur is provided by the thiocarboxylate moiety of the carrier protein ThiS. In vitro, sulfur can be provided by H(2)S. The protein is Thiazole synthase of Deinococcus geothermalis (strain DSM 11300 / CIP 105573 / AG-3a).